Consider the following 277-residue polypeptide: Probable septum site-determining protein MinC (277 aa).

The interval 107 to 168 is disordered; the sequence is TEGLLPGRKG…ESGPQVSHYD (62 aa). Basic and acidic residues predominate over residues 122–142; the sequence is GKPDGKAAEGRAPDHGTEGRA.

Belongs to the MinC family. Interacts with MinD and FtsZ.

In terms of biological role, cell division inhibitor that blocks the formation of polar Z ring septums. Rapidly oscillates between the poles of the cell to destabilize FtsZ filaments that have formed before they mature into polar Z rings. Prevents FtsZ polymerization. The chain is Probable septum site-determining protein MinC from Mesorhizobium japonicum (strain LMG 29417 / CECT 9101 / MAFF 303099) (Mesorhizobium loti (strain MAFF 303099)).